The primary structure comprises 249 residues: uncharacterized protein (249 aa).

This sequence belongs to the ycf73 family.

Its subcellular location is the plastid. The protein localises to the chloroplast. This is an uncharacterized protein from Oryza sativa (Rice).